Here is a 713-residue protein sequence, read N- to C-terminus: Probable arginine--tRNA ligase, cytoplasmic (713 aa).

The interval 74–113 (KNKKNGVKATSTSSPSSSTSAPAEKKAKKDGKTGGAPPKQ) is disordered. The span at 81–95 (KATSTSSPSSSTSAP) shows a compositional bias: low complexity. A compositionally biased stretch (basic and acidic residues) spans 96–105 (AEKKAKKDGK). L-arginine is bound by residues 252–254 (SPN), His263, Tyr438, Asp442, and Gln466. Residues 252 to 263 (SPNIAKEMHVGH) carry the 'HIGH' region motif. The segment at 583-597 (NTAVYLLYAYTRIQS) is interaction with tRNA.

It belongs to the class-I aminoacyl-tRNA synthetase family.

It localises to the cytoplasm. The protein resides in the cytosol. It catalyses the reaction tRNA(Arg) + L-arginine + ATP = L-arginyl-tRNA(Arg) + AMP + diphosphate. Its function is as follows. Forms part of a macromolecular complex that catalyzes the attachment of specific amino acids to cognate tRNAs during protein synthesis. This chain is Probable arginine--tRNA ligase, cytoplasmic, found in Caenorhabditis elegans.